The following is a 206-amino-acid chain: Small ribosomal subunit protein uS5 (206 aa).

The segment at 1-42 (MENKTEVVVAENANNQTQPERKKFDRKPNRRPQGPKQFQKDD) is disordered. Residues 43-106 (FEEKVVTIRR…KEAKKNLIRV (64 aa)) enclose the S5 DRBM domain.

Belongs to the universal ribosomal protein uS5 family. As to quaternary structure, part of the 30S ribosomal subunit. Contacts proteins S4 and S8.

With S4 and S12 plays an important role in translational accuracy. Its function is as follows. Located at the back of the 30S subunit body where it stabilizes the conformation of the head with respect to the body. The protein is Small ribosomal subunit protein uS5 of Mesoplasma florum (strain ATCC 33453 / NBRC 100688 / NCTC 11704 / L1) (Acholeplasma florum).